Reading from the N-terminus, the 299-residue chain is Plant-type L-asparaginase (299 aa).

Thr169 (nucleophile) is an active-site residue. Substrate contacts are provided by residues 197-200 and 220-223; these read RVGD and TGVG.

This sequence belongs to the Ntn-hydrolase family. Heterotetramer of two alpha and two beta chains arranged as a dimer of alpha/beta heterodimers. The uncleaved protein forms homodimers. In terms of processing, autocleaved. Generates the alpha and beta subunits. The N-terminal residue of the beta subunit is thought to be responsible for the nucleophile hydrolase activity.

The enzyme catalyses L-asparagine + H2O = L-aspartate + NH4(+). Its activity is regulated as follows. Divalent metal ions and EDTA do not have significant effect on enzyme activity, indicating that activity is metal-independent. Catalyzes the hydrolysis of L-asparagine into L-aspartate and ammonia. Also displays D-asparaginase activity, which is about 20% of the L-asparaginase activity. Does not exhibit glutaminase activity. This chain is Plant-type L-asparaginase, found in Pyrobaculum calidifontis (strain DSM 21063 / JCM 11548 / VA1).